The sequence spans 522 residues: Occludin (522 aa).

The tract at residues 1-20 is disordered; it reads MSSRPLESPPPYRPDEFKPN. Residues 1-66 are Cytoplasmic-facing; that stretch reads MSSRPLESPP…KWTSPPGVIR (66 aa). Residues 60 to 269 enclose the MARVEL domain; it reads SPPGVIRILS…IIFFAVKTRR (210 aa). The helical transmembrane segment at 67–89 threads the bilayer; it reads ILSMLIIVMCIAIFACVASTLAW. The Extracellular portion of the chain corresponds to 90–135; it reads DRGYGTSLLGGSVGYPYGGSGFGSYGSGYGYGYGYGYGYGGYTDPR. A helical transmembrane segment spans residues 136–160; that stretch reads AAKGFMLAMAAFCFIAALVIFVTSV. The Cytoplasmic segment spans residues 161–170; it reads IRSEMSRTRR. A helical membrane pass occupies residues 171–195; it reads YYLSVIIVSAILGIMVFIATIVYIM. Residues 196–243 are Extracellular-facing; the sequence is GVNPTAQSSGSLYGSQIYALCNQFYTPAATGLYVDQYLYHYCVVDPQE. Cys-216 and Cys-237 are disulfide-bonded. A helical membrane pass occupies residues 244–265; that stretch reads AIAIVLGFMIIVAFALIIFFAV. The Cytoplasmic portion of the chain corresponds to 266-522; it reads KTRRKMDRYD…MVGDYDRQKT (257 aa). Position 302 is a phosphoserine (Ser-302). Residue Thr-305 is modified to Phosphothreonine. Residues Ser-313, Ser-321, and Ser-340 each carry the phosphoserine modification. The disordered stretch occupies residues 360 to 407; that stretch reads VDDFRQPRYSSGGNFETPSKRAPAKGRAGRSKRTEQDHYETDYTTGGE. Polar residues predominate over residues 367-376; the sequence is RYSSGGNFET. Tyr-368 bears the Phosphotyrosine mark. 2 positions are modified to phosphoserine: Ser-369 and Ser-370. Basic residues predominate over residues 381–390; the sequence is APAKGRAGRS. A compositionally biased stretch (basic and acidic residues) spans 391–400; that stretch reads KRTEQDHYET. A phosphotyrosine mark is found at Tyr-398 and Tyr-402. Phosphothreonine; by PKC/PRKCH occurs at positions 403 and 404. At Ser-408 the chain carries Phosphoserine. An OCEL domain is found at 414–522; the sequence is EDWIREYPPI…MVGDYDRQKT (109 aa). Residues 426 to 489 adopt a coiled-coil conformation; it reads DQQRQLYKRN…EYNRLKQVKG (64 aa). At Ser-490 the chain carries Phosphoserine.

This sequence belongs to the ELL/occludin family. In terms of assembly, interacts with TJP1/ZO1. Interacts with VAPA. Interacts with CLDN1, CLDN6, CLDN9, CLDN11, CLDN12 and CLDN17. Interacts with PLSCR1. Interacts with LSR, ILDR1 and ILDR2. Interacts with TJP2/ZO2. Dephosphorylated by PTPRJ. The tyrosine phosphorylation on Tyr-398 and Tyr-402 reduces its ability to interact with TJP1. Phosphorylation at Ser-490 also attenuates the interaction with TJP1. In terms of processing, (Microbial infection) Cleaved by S.pyogenes SpeB protease; leading to its degradation. Degradation by SpeB promotes bacterial translocation across the host epithelial barrier. As to expression, localized at tight junctions of both epithelial and endothelial cells. Highly expressed in kidney. Not detected in testis.

It is found in the cell membrane. It localises to the cell junction. Its subcellular location is the tight junction. Functionally, may play a role in the formation and regulation of the tight junction (TJ) paracellular permeability barrier. It is able to induce adhesion when expressed in cells lacking tight junctions. (Microbial infection) Acts as a coreceptor for hepatitis C virus (HCV) in hepatocytes. This is Occludin (OCLN) from Homo sapiens (Human).